Reading from the N-terminus, the 411-residue chain is 2,3-bisphosphoglycerate-independent phosphoglycerate mutase (411 aa).

Belongs to the BPG-independent phosphoglycerate mutase family. A-PGAM subfamily.

The enzyme catalyses (2R)-2-phosphoglycerate = (2R)-3-phosphoglycerate. It participates in carbohydrate degradation; glycolysis; pyruvate from D-glyceraldehyde 3-phosphate: step 3/5. Its function is as follows. Catalyzes the interconversion of 2-phosphoglycerate and 3-phosphoglycerate. The sequence is that of 2,3-bisphosphoglycerate-independent phosphoglycerate mutase from Pyrobaculum aerophilum (strain ATCC 51768 / DSM 7523 / JCM 9630 / CIP 104966 / NBRC 100827 / IM2).